A 332-amino-acid polypeptide reads, in one-letter code: Ketol-acid reductoisomerase (NADP(+)) (332 aa).

Residues 1-182 (MATIYYEKDA…GCTRAGVLAT (182 aa)) enclose the KARI N-terminal Rossmann domain. NADP(+)-binding positions include 25–28 (YGSQ), Arg48, Ser53, and 83–86 (DELQ). His108 is a catalytic residue. Position 134 (Gly134) interacts with NADP(+). In terms of domain architecture, KARI C-terminal knotted spans 183–328 (TFKEETETDL…KELRSMMPWL (146 aa)). Asp191, Glu195, Glu227, and Glu231 together coordinate Mg(2+). Position 252 (Ser252) interacts with substrate.

It belongs to the ketol-acid reductoisomerase family. It depends on Mg(2+) as a cofactor.

The enzyme catalyses (2R)-2,3-dihydroxy-3-methylbutanoate + NADP(+) = (2S)-2-acetolactate + NADPH + H(+). It carries out the reaction (2R,3R)-2,3-dihydroxy-3-methylpentanoate + NADP(+) = (S)-2-ethyl-2-hydroxy-3-oxobutanoate + NADPH + H(+). It functions in the pathway amino-acid biosynthesis; L-isoleucine biosynthesis; L-isoleucine from 2-oxobutanoate: step 2/4. It participates in amino-acid biosynthesis; L-valine biosynthesis; L-valine from pyruvate: step 2/4. In terms of biological role, involved in the biosynthesis of branched-chain amino acids (BCAA). Catalyzes an alkyl-migration followed by a ketol-acid reduction of (S)-2-acetolactate (S2AL) to yield (R)-2,3-dihydroxy-isovalerate. In the isomerase reaction, S2AL is rearranged via a Mg-dependent methyl migration to produce 3-hydroxy-3-methyl-2-ketobutyrate (HMKB). In the reductase reaction, this 2-ketoacid undergoes a metal-dependent reduction by NADPH to yield (R)-2,3-dihydroxy-isovalerate. The polypeptide is Ketol-acid reductoisomerase (NADP(+)) (Methanocella arvoryzae (strain DSM 22066 / NBRC 105507 / MRE50)).